The sequence spans 432 residues: Nematocyst expressed protein 3-like (432 aa).

The first 19 residues, 1–19 (MRVVYLVLVVAVIIAITEA), serve as a signal peptide directing secretion. 6 cysteine pairs are disulfide-bonded: Cys52-Cys91, Cys59-Cys84, Cys73-Cys88, Cys125-Cys140, Cys157-Cys176, and Cys166-Cys180. 3 consecutive ShKT domains span residues 59-91 (CKAFGKIAKKDKKSCFNNPDKARMACPVSCKLC), 107-143 (VVRAMCVDIEVDQCNPDVCYTNPDWATENCRKTCMLC), and 149-183 (GPCDTDPRCPFWGQYGYCSTATYIDNHCPYNCDVY). The span at 235-313 (GAQYPAATAA…PEAAPSEPEA (79 aa)) shows a compositional bias: low complexity. The interval 235–432 (GAQYPAATAA…KSKSGHKRHH (198 aa)) is disordered. Over residues 314 to 330 (APAPAPEMAPAPAPEMA) the composition is skewed to pro residues. Positions 331–408 (PAPEAASAPA…AAPSEQPMPG (78 aa)) are enriched in low complexity. A compositionally biased stretch (basic residues) spans 409–432 (KKSKSKPSKRKGVKKSKSGHKRHH).

Belongs to the NEP3 family. As to expression, nematocytes. In late planulae, transcripts are found throughout the ectoderm in nematocytes, with high concentration of expressing cells in the oral pole. In primary polyps, is expressed in nematocytes in the body wall and physa ectoderm and in the upper and lower pharynx.

It localises to the nematocyst. It is found in the secreted. Functionally, probable toxin. This Nematostella vectensis (Starlet sea anemone) protein is Nematocyst expressed protein 3-like.